The sequence spans 644 residues: Threonine--tRNA ligase (644 aa).

Positions 8–70 (VKAMVITLRD…EEDGELEILT (63 aa)) constitute a TGS domain. Residues 251–541 (DHRKLGKELD…LTEHFAGAFP (291 aa)) are catalytic. Zn(2+)-binding residues include cysteine 342, histidine 393, and histidine 518.

It belongs to the class-II aminoacyl-tRNA synthetase family. As to quaternary structure, homodimer. Zn(2+) serves as cofactor.

It localises to the cytoplasm. It carries out the reaction tRNA(Thr) + L-threonine + ATP = L-threonyl-tRNA(Thr) + AMP + diphosphate + H(+). Functionally, catalyzes the attachment of threonine to tRNA(Thr) in a two-step reaction: L-threonine is first activated by ATP to form Thr-AMP and then transferred to the acceptor end of tRNA(Thr). Also edits incorrectly charged L-seryl-tRNA(Thr). This is Threonine--tRNA ligase from Caldanaerobacter subterraneus subsp. tengcongensis (strain DSM 15242 / JCM 11007 / NBRC 100824 / MB4) (Thermoanaerobacter tengcongensis).